The chain runs to 474 residues: Ubiquinol-cytochrome-c reductase complex core protein 2, mitochondrial (474 aa).

The N-terminal 42 residues, 1–42 (MKSVVRSKGTQALFRRFSSALGDSINPNQVGVGDNVIRVNGR), are a transit peptide targeting the mitochondrion.

It belongs to the peptidase M16 family. UQCRC2/QCR2 subfamily. Component of the ubiquinol-cytochrome c oxidoreductase (cytochrome b-c1 complex, complex III, CIII), a multisubunit enzyme composed of 3 respiratory subunits cytochrome b, cytochrome c1 and Rieske protein, 2 core protein subunits, and additional low-molecular weight protein subunits. The complex exists as an obligatory dimer and forms supercomplexes (SCs) in the inner mitochondrial membrane with cytochrome c oxidase (complex IV, CIV).

The protein resides in the mitochondrion inner membrane. Its function is as follows. Component of the ubiquinol-cytochrome c oxidoreductase, a multisubunit transmembrane complex that is part of the mitochondrial electron transport chain which drives oxidative phosphorylation. The respiratory chain contains 3 multisubunit complexes succinate dehydrogenase (complex II, CII), ubiquinol-cytochrome c oxidoreductase (cytochrome b-c1 complex, complex III, CIII) and cytochrome c oxidase (complex IV, CIV), that cooperate to transfer electrons derived from NADH and succinate to molecular oxygen, creating an electrochemical gradient over the inner membrane that drives transmembrane transport and the ATP synthase. The cytochrome b-c1 complex catalyzes electron transfer from ubiquinol to cytochrome c, linking this redox reaction to translocation of protons across the mitochondrial inner membrane, with protons being carried across the membrane as hydrogens on the quinol. In the process called Q cycle, 2 protons are consumed from the matrix, 4 protons are released into the intermembrane space and 2 electrons are passed to cytochrome c. The sequence is that of Ubiquinol-cytochrome-c reductase complex core protein 2, mitochondrial from Euglena gracilis.